The following is a 505-amino-acid chain: Maturase K (505 aa).

The protein belongs to the intron maturase 2 family. MatK subfamily.

The protein resides in the plastid. It localises to the chloroplast. In terms of biological role, usually encoded in the trnK tRNA gene intron. Probably assists in splicing its own and other chloroplast group II introns. The polypeptide is Maturase K (Sciadopitys verticillata (Japanese umbrella-pine)).